A 538-amino-acid polypeptide reads, in one-letter code: Phosphoenolpyruvate carboxykinase (ATP) (538 aa).

Substrate-binding residues include R64, Y205, and K211. ATP is bound by residues K211, H230, and 246–254; that span reads GLSGTGKTT. Positions 211 and 230 each coordinate Mn(2+). D267 is a Mn(2+) binding site. Residues E295, R331, 447–448, and T453 contribute to the ATP site; that span reads RI. R331 serves as a coordination point for substrate.

Belongs to the phosphoenolpyruvate carboxykinase (ATP) family. In terms of assembly, monomer. It depends on Mn(2+) as a cofactor.

The protein localises to the cytoplasm. It carries out the reaction oxaloacetate + ATP = phosphoenolpyruvate + ADP + CO2. Its pathway is carbohydrate biosynthesis; gluconeogenesis. Involved in the gluconeogenesis. Catalyzes the conversion of oxaloacetate (OAA) to phosphoenolpyruvate (PEP) through direct phosphoryl transfer between the nucleoside triphosphate and OAA. This is Phosphoenolpyruvate carboxykinase (ATP) from Haemophilus influenzae (strain PittGG).